A 78-amino-acid polypeptide reads, in one-letter code: Large ribosomal subunit protein bL28 (78 aa).

Belongs to the bacterial ribosomal protein bL28 family.

The sequence is that of Large ribosomal subunit protein bL28 from Dichelobacter nodosus (strain VCS1703A).